A 145-amino-acid chain; its full sequence is Sperm mitochondrial-associated cysteine-rich protein (145 aa).

4 positions are modified to phosphoserine: serine 38, serine 45, serine 113, and serine 131. The segment at cysteine 105 to lysine 145 is disordered. Polar residues predominate over residues aspartate 116–lysine 145.

As to expression, testis. Selectively expressed in the spermatids of seminiferous tubules and in flagella of epididymal sperm.

The protein localises to the cytoplasm. The protein resides in the mitochondrion membrane. In terms of biological role, involved in sperm motility. Its absence is associated with genetic background dependent male infertility. Infertility may be due to reduced sperm motility in the female reproductive tract and inability to penetrate the oocyte zona pellucida. This Rattus norvegicus (Rat) protein is Sperm mitochondrial-associated cysteine-rich protein (Smcp).